Consider the following 316-residue polypeptide: GPI-specific phospholipase A2-like PGAP3 (316 aa).

Residues 1 to 19 form the signal peptide; the sequence is MFLAAAAFLLSAPASASQG. Residues 20-97 are Lumenal-facing; it reads DKEPVYRDCV…GKWPFARFLC (78 aa). An N-linked (GlcNAc...) asparagine glycan is attached at Asn36. A helical transmembrane segment spans residues 98–118; sequence FEEPASALASLLNGLACLLML. Residues 119–131 lie on the Cytoplasmic side of the membrane; sequence LRYRSAVPCQSPM. Residues 132-152 traverse the membrane as a helical segment; sequence YHTITAFSLVSLNAWFWSTVF. Residues 153–165 are Lumenal-facing; sequence HTRDTYLTEKMDY. The helical transmembrane segment at 166–186 threads the bilayer; the sequence is FCASAVILYSIYLCCVRTLGL. At 187–194 the chain is on the cytoplasmic side; it reads RRPAISSM. A helical transmembrane segment spans residues 195–215; the sequence is VGVLLILAFTSHVSYLTFVSF. The Lumenal segment spans residues 216-220; that stretch reads DYGYN. A helical membrane pass occupies residues 221–241; sequence MAANASIGIINLLWWLCWCWL. Over 242-254 the chain is Cytoplasmic; the sequence is NRRILPYWWRCGM. A helical transmembrane segment spans residues 255–275; sequence VVLLLHGLALLELLDFPPLFW. Residues 276-278 are Lumenal-facing; sequence VLD. Residues 279–299 form a helical membrane-spanning segment; the sequence is AHAVWHLSTVPVHFLFYSFLI. Residues 300–316 lie on the Cytoplasmic side of the membrane; it reads DDSLHLLNTEKPGVKLD.

It belongs to the PGAP3 family.

The protein localises to the golgi apparatus membrane. Its function is as follows. Involved in the fatty acid remodeling steps of GPI-anchor maturation where the unsaturated acyl chain at sn-2 of inositol phosphate is replaced by a saturated stearoyl chain. May catalyze the first step of the fatty acid remodeling, by removing the unsaturated acyl chain at sn-2 of inositol phosphate, generating a lyso-GPI intermediate. The fatty acid remodeling steps is critical for the integration of GPI-APs into lipid rafts. This is GPI-specific phospholipase A2-like PGAP3 from Danio rerio (Zebrafish).